Here is a 396-residue protein sequence, read N- to C-terminus: Methionine import ATP-binding protein MetN 2 (396 aa).

The ABC transporter domain occupies 41-280 (VSFELVGKVF…PRHGATRALL (240 aa)). 77–84 (GRSGAGKS) serves as a coordination point for ATP.

This sequence belongs to the ABC transporter superfamily. Methionine importer (TC 3.A.1.24) family. As to quaternary structure, the complex is composed of two ATP-binding proteins (MetN), two transmembrane proteins (MetI) and a solute-binding protein (MetQ).

The protein localises to the cell inner membrane. The catalysed reaction is L-methionine(out) + ATP + H2O = L-methionine(in) + ADP + phosphate + H(+). It catalyses the reaction D-methionine(out) + ATP + H2O = D-methionine(in) + ADP + phosphate + H(+). Part of the ABC transporter complex MetNIQ involved in methionine import. Responsible for energy coupling to the transport system. The chain is Methionine import ATP-binding protein MetN 2 from Burkholderia pseudomallei (strain 1710b).